A 369-amino-acid chain; its full sequence is Endophilin-A (369 aa).

A BAR domain is found at 18–248 (TEKMGGAEGT…LQEKRSEAES (231 aa)). Positions 227–247 (QCADVLRGLQETLQEKRSEAE) form a coiled coil. Residues 266–295 (GGGGGLNEDGTPSHISSSASPLPSPMRSPA) are disordered. Positions 277–294 (PSHISSSASPLPSPMRSP) are enriched in low complexity. The 60-residue stretch at 305 to 364 (QQQPCCQALYDFEPENPGELAFKENDIITLLNRVDDNWFEGAVNGRTGYFPQSYVQVQVP) folds into the SH3 domain.

This sequence belongs to the endophilin family.

The protein resides in the cytoplasm. The protein localises to the membrane. Required presynaptically at the neuromuscular junction. Implicated in synaptic vesicle endocytosis. This chain is Endophilin-A, found in Drosophila erecta (Fruit fly).